Here is a 92-residue protein sequence, read N- to C-terminus: C-C motif chemokine 3 (92 aa).

The N-terminal stretch at 1–23 (MKVSTTALAVLLCTMTLCNQVFS) is a signal peptide. Cystine bridges form between cysteine 34–cysteine 57 and cysteine 35–cysteine 73.

It belongs to the intercrine beta (chemokine CC) family. As to quaternary structure, self-associates. Also heterodimer of MIP-1-alpha(4-69) and MIP-1-beta(3-69). Interacts with CCR1. As to expression, expressed in lung, spleen, and pancreas.

The protein localises to the secreted. Monokine with inflammatory and chemokinetic properties. Binds to CCR1, CCR4 and CCR5. One of the major HIV-suppressive factors produced by CD8+ T-cells. Recombinant MIP-1-alpha induces a dose-dependent inhibition of different strains of HIV-1, HIV-2, and simian immunodeficiency virus (SIV). This is C-C motif chemokine 3 (Ccl3) from Mus musculus (Mouse).